The chain runs to 479 residues: Phosphatidylinositol 4-kinase type 2-alpha (479 aa).

Position 1 is an N-acetylmethionine (Met1). Positions 1–58 (MDETSPLVSPERAQPPEYTFPSGSGAHFPQVPGGAVRVAAAAGSGPSPPCSPGHDRER) are disordered. Phosphoserine occurs at positions 5, 9, 44, 47, and 51. A compositionally biased stretch (low complexity) spans 31 to 45 (VPGGAVRVAAAAGSG). The region spanning 124 to 453 (SIYPERIYQG…VQMPPVIVET (330 aa)) is the PI3K/PI4K catalytic domain. Positions 130–136 (IYQGSSG) are G-loop. Residues 131–137 (YQGSSGS) and Lys152 each bind ATP. The important for substrate binding stretch occupies residues 157–159 (EPY). The tract at residues 165-178 (KWTKWLQKLCCPCC) is important for interaction with membranes. Residues Cys174, Cys175, Cys177, and Cys178 are each lipidated (S-palmitoyl cysteine). 261–264 (QLFV) is an ATP binding site. Positions 268–276 (KDADYWLRR) are important for interaction with membranes. The tract at residues 305–313 (RNTDRGNDN) is catalytic loop. An activation loop region spans residues 344–364 (AIDNGLAFPLKHPDSWRAYPF). Residue Asp346 coordinates ATP. Residues 359–368 (WRAYPFYWAW) are important for interaction with membranes. Ser462 is subject to Phosphoserine.

It belongs to the PI3/PI4-kinase family. Type II PI4K subfamily. Associates with the BLOC-1 and the AP-3 complexes; the BLOC-1 complex is required for optimal binding of PI4K2A to the AP-3 complex. Interacts with BLOC1S5 and DTNBP1. Interacts with ITCH. Interacts with FOS; this interaction may enhance phosphatidylinositol phosphorylation activity. Interacts with ATG9A. In terms of processing, palmitoylated by ZDHHC3 and ZDHHC7 in the CCPCC motif. Palmitoylation is cholesterol-dependent, and required for TGN localization. Ubiquitinated by ITCH; this does not lead to proteasomal degradation. Detected in brain (at protein level).

It is found in the golgi apparatus. The protein resides in the trans-Golgi network membrane. It localises to the membrane raft. The protein localises to the endosome. Its subcellular location is the endosome membrane. It is found in the cytoplasmic vesicle. The protein resides in the cell projection. It localises to the dendrite. The protein localises to the presynaptic cell membrane. Its subcellular location is the synapse. It is found in the synaptosome. The protein resides in the mitochondrion. It localises to the membrane. The protein localises to the cell membrane. Its subcellular location is the perikaryon. It is found in the neuron projection. It catalyses the reaction a 1,2-diacyl-sn-glycero-3-phospho-(1D-myo-inositol) + ATP = a 1,2-diacyl-sn-glycero-3-phospho-(1D-myo-inositol 4-phosphate) + ADP + H(+). In terms of biological role, membrane-bound phosphatidylinositol-4 kinase (PI4-kinase) that catalyzes the phosphorylation of phosphatidylinositol (PI) to phosphatidylinositol 4-phosphate (PI4P), a lipid that plays important roles in endocytosis, Golgi function, protein sorting and membrane trafficking and is required for prolonged survival of neurons. Besides, phosphorylation of phosphatidylinositol (PI) to phosphatidylinositol 4-phosphate (PI4P) is the first committed step in the generation of phosphatidylinositol 4,5-bisphosphate (PIP2), a precursor of the second messenger inositol 1,4,5-trisphosphate (InsP3). This Mus musculus (Mouse) protein is Phosphatidylinositol 4-kinase type 2-alpha (Pi4k2a).